The chain runs to 1188 residues: DNA-directed RNA polymerase subunit beta (1188 aa).

It belongs to the RNA polymerase beta chain family. In terms of assembly, the RNAP catalytic core consists of 2 alpha, 1 beta, 1 beta' and 1 omega subunit. When a sigma factor is associated with the core the holoenzyme is formed, which can initiate transcription.

The enzyme catalyses RNA(n) + a ribonucleoside 5'-triphosphate = RNA(n+1) + diphosphate. DNA-dependent RNA polymerase catalyzes the transcription of DNA into RNA using the four ribonucleoside triphosphates as substrates. The chain is DNA-directed RNA polymerase subunit beta from Streptococcus equi subsp. equi (strain 4047).